Consider the following 2499-residue polypeptide: Polyprotein P1234 (2499 aa).

Residues Val-30–His-260 form the Alphavirus-like MT domain. The nsP1 membrane-binding stretch occupies residues Gly-245–Val-264. Cys-420 carries the S-palmitoyl cysteine; by host lipid modification. The 156-residue stretch at Glu-694–Lys-849 folds into the (+)RNA virus helicase ATP-binding domain. Residue Gly-725 to Ser-732 participates in a ribonucleoside 5'-triphosphate binding. One can recognise a (+)RNA virus helicase C-terminal domain in the interval Tyr-850–Asp-998. In terms of domain architecture, Peptidase C9 spans Asp-1011–Tyr-1339. A nucleolus localization signal region spans residues Pro-1012–Thr-1031. The active-site For cysteine protease nsP2 activity is the Cys-1020. Residues Thr-1065–Ser-1074 carry the Nuclear export signal motif. Residue His-1097 is the For cysteine protease nsP2 activity of the active site. The Nuclear localization signal motif lies at Val-1194 to Ile-1198. A Macro domain is found at Ala-1346–Glu-1505. Residues Asn-1369, Gly-1377, Gly-1457, Ile-1458, and Tyr-1459 each coordinate ADP-D-ribose. Positions 1608, 1610, 1633, and 1651 each coordinate Zn(2+). Short sequence motifs (FGDF; binding to host G3BP1) lie at residues Phe-1845–Phe-1848 and Phe-1865–Phe-1868. In terms of domain architecture, RdRp catalytic spans His-2253 to Ala-2368.

In terms of assembly, interacts with non-structural protein 3. Interacts with RNA-directed RNA polymerase nsP4. Interacts with protease nsP2. interacts with itself. As to quaternary structure, interacts with mRNA-capping enzyme nsP1. Interacts with host DDX1. Interacts with host DDX3. Interacts (via C-terminus) with host G3BP1; this interaction inhibits the formation of host stress granules on viral mRNAs and the nsp3-G3BP1 complexes bind viral RNAs and probably orchestrate the assembly of viral replication complexes. Interacts (via C-terminus) with host G3BP2; this interaction inhibits the formation of host stress granules on viral mRNAs and the nsp3-G3BP2 complexes bind viral RNAs and probably orchestrate the assembly of viral replication complexes. Interacts with mRNA-capping enzyme nsP1. Interacts with protease nsP2. interacts with itself. In terms of assembly, interacts with RNA-directed RNA polymerase nsP4. Interacts with mRNA-capping enzyme nsP1. Interacts with KPNA1/karyopherin-alpha1; this interaction probably allows the active transport of protease nsP2 into the host nucleus. Mg(2+) is required as a cofactor. Requires Mn(2+) as cofactor. In terms of processing, specific enzymatic cleavages in vivo yield mature proteins. The processing of the polyprotein is temporally regulated. In early stages (1.7 hpi), P1234 is first cleaved in trans through its nsP2 protease activity, releasing P123' and nsP4, which associate to form the early replication complex. At the same time, P1234 is also cut at the nsP1/nsP2 site early in infection but with lower efficiency. After replication of the viral minus-strand RNAs (4 hpi), the polyproteins are cut at the nsP1/nsP2 and nsP2/nsP3 sites very efficiently, preventing accumulation of P123' and P1234 and allowing the formation of the late replication complex. NsP3'/nsP4 site is not cleaved anymore and P34 is produced rather than nsP4. Post-translationally, specific enzymatic cleavages in vivo yield mature proteins. The processing of the polyprotein is temporally regulated. In early stages (1.7 hpi), P123 is cleaved at the nsP1/nsP2 site with low efficiency. After replication of the viral minus-strand RNAs (4 hpi), the polyproteins are cut at the nsP1/nsP2 and nsP2/nsP3 sites very efficiently, preventing accumulation of P123 and allowing the formation of the late replication complex. Specific enzymatic cleavages in vivo yield mature proteins. The processing of the polyprotein is temporally regulated. In early stages (1.7 hpi), P123' is cleaved at the nsP1/nsP2 site with low efficiency. After replication of the viral minus-strand RNAs (4 hpi), the polyproteins are cut at the nsP1/nsP2 and nsP2/nsP3 sites very efficiently, preventing accumulation of P123' and allowing the formation of the late replication complex. In terms of processing, palmitoylated by host palmitoyltransferases ZDHHC2 and ZDHHC19. Post-translationally, phosphorylated by host on serines and threonines. Ubiquitinated; targets the protein for rapid degradation via the ubiquitin system. Nsp4 is present in extremely low quantities due to low frequency of translation through the amber stop-codon and the degradation by the ubiquitin pathway.

Its subcellular location is the host cytoplasmic vesicle membrane. It localises to the host cell membrane. It is found in the host cell projection. The protein resides in the host filopodium. The protein localises to the host nucleus. Its subcellular location is the host cytoplasm. It carries out the reaction GTP + S-adenosyl-L-methionine = N(7)-methyl-GTP + S-adenosyl-L-homocysteine. The catalysed reaction is N(7)-methyl-GTP + L-histidyl-[protein] = N(tele)-(N(7)-methylguanosine 5'-phospho)-L-histidyl-[protein] + diphosphate. It catalyses the reaction N(tele)-(N(7)-methylguanosine 5'-phospho)-L-histidyl-[protein] + a 5'-end diphospho-(purine-ribonucleoside) in mRNA + H(+) = a 5'-end (N(7)-methyl 5'-triphosphoguanosine)-(purine-ribonucleoside) in mRNA + L-histidyl-[protein]. The enzyme catalyses a 5'-end triphospho-ribonucleoside in mRNA + H2O = a 5'-end diphospho-ribonucleoside in mRNA + phosphate + H(+). It carries out the reaction a ribonucleoside 5'-triphosphate + H2O = a ribonucleoside 5'-diphosphate + phosphate + H(+). The catalysed reaction is ATP + H2O = ADP + phosphate + H(+). It catalyses the reaction RNA(n) + a ribonucleoside 5'-triphosphate = RNA(n+1) + diphosphate. The enzyme catalyses RNA(n) + ATP = RNA(n)-3'-adenine ribonucleotide + diphosphate. It carries out the reaction 4-O-(ADP-D-ribosyl)-L-aspartyl-[protein] + H2O = L-aspartyl-[protein] + ADP-D-ribose + H(+). The catalysed reaction is 5-O-(ADP-D-ribosyl)-L-glutamyl-[protein] + H2O = L-glutamyl-[protein] + ADP-D-ribose + H(+). It catalyses the reaction ADP-alpha-D-ribose 1''-phosphate + H2O = ADP-D-ribose + phosphate. In terms of biological role, inactive precursor of the viral replicase, which is activated by cleavages carried out by the viral protease nsP2. The early replication complex formed by the polyprotein P123 and nsP4 synthesizes minus-strand RNAs. As soon P123 is cleaved into mature proteins, the plus-strand RNAs synthesis begins. Its function is as follows. The early replication complex formed by the polyprotein P123' and nsP4 synthesizes minus-strand RNAs. Polyprotein P123' is a short-lived polyprotein that accumulates during early stage of infection. As soon P123' is cleaved into mature proteins, the plus-strand RNAs synthesis begins. Functionally, cytoplasmic capping enzyme that catalyzes two virus-specific reactions: methyltransferase and nsP1 guanylyltransferase. mRNA-capping is necessary since all viral RNAs are synthesized in the cytoplasm, and host capping enzymes are restricted to the nucleus. The enzymatic reaction involves a covalent link between 7-methyl-GMP and nsP1, whereas eukaryotic capping enzymes form a covalent complex only with GMP. nsP1 capping consists in the following reactions: GTP is first methylated into 7-methyl-GMP and then is covalently linked to nsP1 to form the m7GMp-nsP1 complex from which 7-methyl-GMP complex is transferred to the mRNA to create the cap structure. NsP1 is needed for the initiation of the minus-strand RNAs synthesis. Probably serves as a membrane anchor for the replication complex composed of nsP1-nsP4. Palmitoylated nsP1 is remodeling host cell cytoskeleton, and induces filopodium-like structure formation at the surface of the host cell. In terms of biological role, multifunctional protein whose N-terminus is part of the RNA polymerase complex and displays NTPase, RNA triphosphatase and helicase activities. NTPase and RNA triphosphatase are involved in viral RNA capping and helicase keeps a check on the dsRNA replication intermediates. The C-terminus harbors a protease that specifically cleaves the polyproteins and releases the mature proteins. Required for the shutoff of minus-strand RNAs synthesis. Specifically inhibits the host IFN response by promoting the nuclear export of host STAT1. Also inhibits host transcription by inducing rapid proteasome-dependent degradation of POLR2A, a catalytic subunit of the RNAPII complex. The resulting inhibition of cellular protein synthesis serves to ensure maximal viral gene expression and to evade host immune response. Seems to be essential for minus-strand RNAs and subgenomic 26S mRNAs synthesis. Displays mono-ADP-ribosylhydrolase activity. ADP-ribosylation is a post-translational modification that controls various processes of the host cell and the virus probably needs to revert it for optimal viral replication. Binds proteins of FXR family and sequesters them into the viral RNA replication complexes thereby inhibiting the formation of host stress granules on viral mRNAs. The nsp3'-FXR complexes bind viral RNAs and probably orchestrate the assembly of viral replication complexes, thanks to the ability of FXR family members to self-assemble and bind DNA. Its function is as follows. Seems to be essential for minus-strand RNAs and subgenomic 26S mRNAs synthesis. Displays mono-ADP-ribosylhydrolase activity. ADP-ribosylation is a post-translantional modification that controls various processes of the host cell and the virus probably needs to revert it for optimal viral replication. Binds proteins of G3BP family and sequesters them into the viral RNA replication complexes thereby inhibiting the formation of host stress granules on viral mRNAs. The nsp3-G3BP complexes bind viral RNAs and probably orchestrate the assembly of viral replication complexes, thanks to the ability of G3BP family members to self-assemble and bind DNA. Functionally, RNA dependent RNA polymerase. Replicates genomic and antigenomic RNA by recognizing replications specific signals. The early replication complex formed by the polyprotein P123 and nsP4 synthesizes minus-strand RNAs. The late replication complex composed of fully processed nsP1-nsP4 is responsible for the production of genomic and subgenomic plus-strand RNAs. The core catalytic domain of nsP4 also possesses terminal adenylyltransferase (TATase) activity that is probably involved in maintenance and repair of the poly(A) tail, an element required for replication of the viral genome. The sequence is that of Polyprotein P1234 from Aura virus (AURAV).